Consider the following 118-residue polypeptide: Beta-2-microglobulin (118 aa).

The signal sequence occupies residues 1-20; that stretch reads MARVVALVLLGLLSLTGLEA. One can recognise an Ig-like C1-type domain in the interval 25-111; the sequence is PKVQVYSRHP…QHSTLKEPLI (87 aa). Cys45 and Cys99 are joined by a disulfide.

Belongs to the beta-2-microglobulin family. In terms of assembly, heterodimer of an alpha chain and a beta chain. Beta-2-microglobulin is the beta-chain of major histocompatibility complex class I molecules.

It is found in the secreted. Component of the class I major histocompatibility complex (MHC). Involved in the presentation of peptide antigens to the immune system. The polypeptide is Beta-2-microglobulin (B2M) (Equus asinus (Donkey)).